Here is a 673-residue protein sequence, read N- to C-terminus: Thimet-like oligopeptidase (673 aa).

A Zn(2+)-binding site is contributed by His465. Glu466 is a catalytic residue. 2 residues coordinate Zn(2+): His469 and His472.

The protein belongs to the peptidase M3 family. Requires Zn(2+) as cofactor.

The chain is Thimet-like oligopeptidase from Dictyostelium discoideum (Social amoeba).